The primary structure comprises 124 residues: Small ribosomal subunit protein uS11 (124 aa).

The segment at 102–124 is disordered; the sequence is RIGRIEDATPIPHDGTTPKRKNR.

The protein belongs to the universal ribosomal protein uS11 family. In terms of assembly, part of the 30S ribosomal subunit.

Its function is as follows. Located on the platform of the 30S subunit. This Methanococcus maripaludis (strain C5 / ATCC BAA-1333) protein is Small ribosomal subunit protein uS11.